Reading from the N-terminus, the 492-residue chain is 2,3-bisphosphoglycerate-independent phosphoglycerate mutase (492 aa).

Positions 11 and 61 each coordinate Mn(2+). Ser61 serves as the catalytic Phosphoserine intermediate. Substrate-binding positions include His118, Arg147 to Asp148, Arg178, Arg184, Arg248 to Arg251, and Lys320. 5 residues coordinate Mn(2+): Asp386, His390, Asp427, His428, and His445.

This sequence belongs to the BPG-independent phosphoglycerate mutase family. In terms of assembly, monomer. Mn(2+) is required as a cofactor.

It catalyses the reaction (2R)-2-phosphoglycerate = (2R)-3-phosphoglycerate. It participates in carbohydrate degradation; glycolysis; pyruvate from D-glyceraldehyde 3-phosphate: step 3/5. Its function is as follows. Catalyzes the interconversion of 2-phosphoglycerate and 3-phosphoglycerate. This chain is 2,3-bisphosphoglycerate-independent phosphoglycerate mutase, found in Campylobacter jejuni subsp. doylei (strain ATCC BAA-1458 / RM4099 / 269.97).